Reading from the N-terminus, the 236-residue chain is CD81 antigen (236 aa).

Over 1 to 12 (MGVEGCTKCIKY) the chain is Cytoplasmic. Residues 13 to 33 (LLFVFNFVFWLAGGVILGVAL) form a helical membrane-spanning segment. Over 34 to 63 (WLRHDPQTTTLLYLELGDKPAPSTFYVGIY) the chain is Extracellular. A helical transmembrane segment spans residues 64 to 84 (ILIAVGAVMMFVGFLGCYGAI). Residues 85–89 (QESQC) lie on the Cytoplasmic side of the membrane. The chain crosses the membrane as a helical span at residues 90–112 (LLGTFFTCLVILFACEVAAGIWG). The Extracellular portion of the chain corresponds to 113–201 (FVNKDQIAKD…QKIDELFSGK (89 aa)). 2 disulfides stabilise this stretch: cysteine 156-cysteine 190 and cysteine 157-cysteine 175. The chain crosses the membrane as a helical span at residues 202-224 (LYLIGIAAIVVAVIMIFEMILSM). Glutamate 219 serves as a coordination point for cholesterol. At 225-236 (VLCCGIRNSSVY) the chain is on the cytoplasmic side.

It belongs to the tetraspanin (TM4SF) family. Homodimer. Part of a complex composed of CD19, CR2/CD21, CD81 and IFITM1/CD225 in the membrane of mature B cells. Interacts (via the second extracellular domain) with CD19; this interaction is initiated early during biosynthesis in the ER and enables trafficking of only properly folded CD19. Part of a complex that includes MHC class II/HLA-DR molecules and IFITM1. Interacts with IFITM1. Interacts with IFITM2 and IFITM3. Part of integrin-tetraspanin complex composed of CD9, CD81, beta-1 and beta-2 integrins in the membrane of monocyte/macrophages. Interacts (via the second extracellular domain) with integrin ITGAV:ITGB3. Interacts with CD247/CD3 zeta, ICAM1 and CD9 at the immune synapse on T cell membrane. Part of a GPCR-tetraspanin complex consisting at least of ADGRG1, CD81, possibly CD9, and GNA11 in which CD81 enhances the association of ADGRG1 with GNA11. Part of a complex composed of CD9, CD81, PTGFRN and IGSF8. Interacts directly with IGSF8. Interacts with CD53 and SCIMP. Interacts with SAMHD1 (via its C-terminus). Interacts with glypican GPC3 and with the transcriptional repressor HHEX; binding to GPC3 decreases the availability of free CD81 for binding to HHEX, resulting in nuclear translocation of HHEX and transcriptional repression. Interacts with CLDN1. Interacts with CLDN6 and CLDN9. Post-translationally, not glycosylated. In terms of processing, likely constitutively palmitoylated at low levels. Protein palmitoylation is up-regulated upon coligation of BCR and CD9-C2R-CD81 complexes in lipid rafts.

The protein resides in the cell membrane. It is found in the basolateral cell membrane. Its function is as follows. Structural component of specialized membrane microdomains known as tetraspanin-enriched microdomains (TERMs), which act as platforms for receptor clustering and signaling. Essential for trafficking and compartmentalization of CD19 receptor on the surface of activated B cells. Upon initial encounter with microbial pathogens, enables the assembly of CD19-CR2/CD21 and B cell receptor (BCR) complexes at signaling TERMs, lowering the threshold dose of antigen required to trigger B cell clonal expansion and antibody production. In T cells, facilitates the localization of CD247/CD3 zeta at antigen-induced synapses with B cells, providing for costimulation and polarization toward T helper type 2 phenotype. Present in MHC class II compartments, may also play a role in antigen presentation. Can act both as positive and negative regulator of homotypic or heterotypic cell-cell fusion processes. Positively regulates sperm-egg fusion and may be involved in acrosome reaction. In myoblasts, associates with CD9 and PTGFRN and inhibits myotube fusion during muscle regeneration. In macrophages, associates with CD9 and beta-1 and beta-2 integrins, and prevents macrophage fusion into multinucleated giant cells specialized in ingesting complement-opsonized large particles. Also prevents the fusion of mononuclear cell progenitors into osteoclasts in charge of bone resorption. May regulate the compartmentalization of enzymatic activities. In T cells, defines the subcellular localization of dNTPase SAMHD1 and permits its degradation by the proteasome, thereby controlling intracellular dNTP levels. Also involved in cell adhesion and motility. Positively regulates integrin-mediated adhesion of macrophages, particularly relevant for the inflammatory response in the lung. This chain is CD81 antigen (Cd81), found in Rattus norvegicus (Rat).